The primary structure comprises 402 residues: Cholinephosphotransferase 1 (402 aa).

The Cytoplasmic segment spans residues 1 to 62 (MGLAEGLAAR…LVEKVPLWLA (62 aa)). The chain crosses the membrane as a helical span at residues 63–83 (PNTITMVGLLLNVLSTLILVC). Asn-64 contacts CDP-choline. Residues 84-93 (YCPTATEGAP) are Lumenal-facing. A helical membrane pass occupies residues 94–118 (FWTYLLCAIGLFVYQSLDAIDGKQA). The Mg(2+) site is built by Asp-111 and Asp-114. Arg-119 is a binding site for CDP-choline. Residues 119–125 (RRTNSSS) lie on the Cytoplasmic side of the membrane. Residues 126–150 (PLGEMFDHGCDSISIVFVNLGTIAA) form a helical membrane-spanning segment. Position 132 (Asp-132) interacts with Mg(2+). The Proton acceptor role is filled by His-133. Asp-136 lines the Mg(2+) pocket. Residues 151–160 (VRLGTLPGWM) are Lumenal-facing. The chain crosses the membrane as a helical span at residues 161-179 (FYCCFVGMFMFYCAQWQTY). Topologically, residues 180 to 190 (VCGTLKFGIID) are cytoplasmic. A helical transmembrane segment spans residues 191–207 (VTELQISVTVMFLMTAV). Topologically, residues 208–222 (CGPELWDYEIPFTGL) are lumenal. A helical transmembrane segment spans residues 223–248 (PMKTIPLLGIIGGTVYSCSNYFRVIL). The Cytoplasmic segment spans residues 249–265 (SGGVGKNGSTVAGTSVL). Residues 266–281 (SPGLHIGLVLLLALMI) form a helical membrane-spanning segment. At 282–293 (YKKSTTNLFLQN) the chain is on the lumenal side. A helical membrane pass occupies residues 294–316 (PCLYTLAFGFVSAKITIKLVIAH). Topologically, residues 317–329 (MTKSEISLQDTAF) are cytoplasmic. A helical transmembrane segment spans residues 330 to 339 (IGPGLLFFNQ). The Lumenal segment spans residues 340–346 (YFNSFID). A helical membrane pass occupies residues 347 to 376 (EYIVLWIAMVISFADLLRYCISVCLQIATH). The Cytoplasmic segment spans residues 377 to 402 (LRISVFRISSNQAAEQVQTQKQKLTD).

It belongs to the CDP-alcohol phosphatidyltransferase class-I family. In terms of assembly, homodimer. Requires Mg(2+) as cofactor. The cofactor is Mn(2+).

The protein localises to the golgi apparatus membrane. It catalyses the reaction CDP-choline + a 1,2-diacyl-sn-glycerol = a 1,2-diacyl-sn-glycero-3-phosphocholine + CMP + H(+). It carries out the reaction 1,2-dioctanoyl-sn-glycerol + CDP-choline = 1,2-dioctanoyl-sn-glycero-3-phosphocholine + CMP + H(+). The catalysed reaction is 1-octadecanoyl-2-(5Z,8Z,11Z,14Z-eicosatetraenoyl)-sn-glycerol + CDP-choline = 1-octadecanoyl-2-(5Z,8Z,11Z,14Z-eicosatetraenoyl)-sn-glycero-3-phosphocholine + CMP + H(+). The enzyme catalyses 1-hexadecanoyl-2-(9Z-octadecenoyl)-sn-glycerol + CDP-choline = 1-hexadecanoyl-2-(9Z-octadecenoyl)-sn-glycero-3-phosphocholine + CMP + H(+). It catalyses the reaction 1-hexadecanoyl-2-(4Z,7Z,10Z,13Z,16Z,19Z-docosahexaenoyl)-sn-glycerol + CDP-choline = 1-hexadecanoyl-2-(4Z,7Z,10Z,13Z,16Z,19Z-docosahexaenoyl)-sn-glycero-3-phosphocholine + CMP + H(+). It participates in phospholipid metabolism; phosphatidylcholine biosynthesis; phosphatidylcholine from phosphocholine: step 2/2. Its function is as follows. Catalyzes the final step of de novo phosphatidylcholine (PC) synthesis, i.e. the transfer of choline phosphate from CDP-choline to the free hydroxyl of a diacylglycerol (DAG), producing a PC. It thereby plays a central role in the formation and maintenance of vesicular membranes. Shows a high preference for CDP-choline over CDP-ethanolamine as substrate. This chain is Cholinephosphotransferase 1 (chpt1), found in Xenopus laevis (African clawed frog).